Reading from the N-terminus, the 979-residue chain is METGSPGKRPVLPKRARLLVTAGMGMLALLLFGPRLVDIYVDWLWFGEVGFRSVWITVLLTRLAIVAAVALVVAGIVLAALLLAYRSRPFFVPDEPQRDPVAPLRSAVMRRPRLFGWGIAVTLGVVCGLIASFDWVKVQLFVHGGTFGIVDPEFGYDIGFFVFDLPFYRSVLNWLFVAVVLAFLASLLTHYLFGGLRLTTGRGMLTQAARVQLAVFAGAVVLLKAVAYWLDRYELLSSGRKEPTFTGAGYTDIHAELPAKLVLVAIAVLCAVSFFTAIFLRDLRIPAMAAALLVLSAILVGGLWPLLMEQFSVRPNAADVERPYIQRNIEATREAYRIGGDWVQYRSYPGIGTKQPRDVPVDVTTIAKVRLLDPHILSRTFTQQQQLKNFFSFAEILDIDRYRIDGELQDYIVGVRELSPKSLTGNQTDWINKHTVYTHGNGFVAAPANRVNAAARGAENISDSNSGYPIYAVSDIASLGSGRQVIPVEQPRVYYGEVIAQADPDYAIVGGAPGSAPREYDTDTSKYTYTGAGGVSIGNWFNRTVFATKVAQHKFLFSREIGSESKVLIHRDPKERVQRVAPWLTTDDNPYPVVVNGRIVWIVDAYTTLDTYPYAQRSSLEGPVTSPTGIVRQGKQVSYVRNSVKATVDAYDGTVTLFQFDRDDPVLRTWMRAFPGTVKSEDQIPDELRAHFRYPEDLFEVQRSLLAKYHVDEPREFFTTNAFWSVPSDPTNNANATQPPFYVLVGDQQSAQPSFRLASAMVGYNREFLSAYISAHSDPANYGKLTVLELPTDTLTQGPQQIQNSMISDTRVASERTLLERSNRIHYGNLLSLPIADGGVLYVEPLYTERISTSPSSSTFPQLSRVLVSVREPRTEGGVRVGYAPTLAESLDQVFGPGTGRVATARGGDAASAPPPGAGGPAPPQAVPPPRTTQPPAAPPRGPDVPPATVAELRETLADLRAVLDRLEKAIDAAETPGG.

7 consecutive transmembrane segments (helical) span residues 19–41 (LVTAGMGMLALLLFGPRLVDIYV), 63–85 (LAIVAAVALVVAGIVLAALLLAY), 114–136 (LFGWGIAVTLGVVCGLIASFDWV), 174–196 (WLFVAVVLAFLASLLTHYLFGGL), 208–230 (AARVQLAVFAGAVVLLKAVAYWL), 261–280 (LVLVAIAVLCAVSFFTAIFL), and 285–307 (IPAMAAALLVLSAILVGGLWPLL). A disordered region spans residues 898–948 (GTGRVATARGGDAASAPPPGAGGPAPPQAVPPPRTTQPPAAPPRGPDVPPA). Residues 913-946 (APPPGAGGPAPPQAVPPPRTTQPPAAPPRGPDVP) show a composition bias toward pro residues.

Belongs to the UPF0182 family.

Its subcellular location is the cell membrane. The sequence is that of UPF0182 protein Rv0064 from Mycobacterium tuberculosis (strain ATCC 25618 / H37Rv).